A 172-amino-acid chain; its full sequence is Adenine phosphoribosyltransferase (172 aa).

Belongs to the purine/pyrimidine phosphoribosyltransferase family. As to quaternary structure, homodimer.

The protein localises to the cytoplasm. The catalysed reaction is AMP + diphosphate = 5-phospho-alpha-D-ribose 1-diphosphate + adenine. The protein operates within purine metabolism; AMP biosynthesis via salvage pathway; AMP from adenine: step 1/1. In terms of biological role, catalyzes a salvage reaction resulting in the formation of AMP, that is energically less costly than de novo synthesis. This chain is Adenine phosphoribosyltransferase, found in Prochlorococcus marinus (strain NATL2A).